The sequence spans 251 residues: MSGHSKWATTKHKKAVVDARRGKMFARLIKNIEVAARVGGGDPAGNPTLYDAIQKAKKSSVPNENIERARKRGAGEEAGGADWQTIMYEGYAPNGVAVLIECLTDNRNRAASEVRVAMTRNGGTMADPGSVSYLFSRKGVVTLEKNGLTEDDVLAAVLEAGAEDVNDLGDSFEVISEPAELVAVRSALQDAGIDYESAEASFQPSVSVPVDLDGARKVFKLVDALEDSDDVQNVWTNVDVSDEVLAALDDE.

The protein belongs to the TACO1 family.

It is found in the cytoplasm. The chain is Probable transcriptional regulatory protein MRA_2631 from Mycobacterium tuberculosis (strain ATCC 25177 / H37Ra).